A 147-amino-acid chain; its full sequence is METLTAISRWLAKQHVVTWCVQQEGELWCANAFYLFDAQKVAFYILTEEKTRHAQMSGPQAAIAGTVNGQPKTVALIRGVQFKGEIRRLEGEESDLARKAYNRRFPVARMLSAPVWEIRLDEIKFTDNTLGFGKKMIWLRNSGTEQA.

Belongs to the UPF0306 family.

This is UPF0306 protein YhbP from Escherichia coli O1:K1 / APEC.